Consider the following 653-residue polypeptide: Fructose-1,6-bisphosphatase class 3 2 (653 aa).

It belongs to the FBPase class 3 family. The cofactor is Mn(2+).

It catalyses the reaction beta-D-fructose 1,6-bisphosphate + H2O = beta-D-fructose 6-phosphate + phosphate. It functions in the pathway carbohydrate biosynthesis; gluconeogenesis. This Clostridium beijerinckii (strain ATCC 51743 / NCIMB 8052) (Clostridium acetobutylicum) protein is Fructose-1,6-bisphosphatase class 3 2.